Reading from the N-terminus, the 786-residue chain is DNA repair and recombination protein RAD54-like (786 aa).

Residues Arg2–Gln9 form a required for chromatin remodeling, strand pairing activities and coupling of ATPase activity region. A Phosphothreonine modification is found at Thr22. The Helicase ATP-binding domain maps to Glu165 to Glu340. Asp178 to Thr185 contributes to the ATP binding site. The DEGH box motif lies at Asp291 to His294. Positions Leu497–Thr654 constitute a Helicase C-terminal domain. The tract at residues Lys740 to Phe786 is disordered. Over residues Glu752–Leu766 the composition is skewed to polar residues.

It belongs to the SNF2/RAD54 helicase family. Interacts (via N-terminus) with spn-A/Rad51.

It is found in the nucleus. In terms of biological role, involved in mitotic DNA repair and meiotic recombination. Functions in the recombinational DNA repair pathway. Essential for interhomolog gene conversion (GC), but may have a less important role in intersister GC than spn-A/Rad51. In the presence of DNA, spn-A/Rad51 enhances the ATPase activity of okr/Rad54. The polypeptide is DNA repair and recombination protein RAD54-like (Drosophila virilis (Fruit fly)).